The primary structure comprises 901 residues: Protein translocase subunit SecA (901 aa).

ATP-binding positions include Gln87, 105–109, and Asp512; that span reads GEGKT. The segment at 859–901 is disordered; the sequence is HQDDDSAAAAALAAQTGERKVGRNDPCPCGSGKKYKQCHGRLQ. Zn(2+)-binding residues include Cys885, Cys887, Cys896, and His897. Basic residues predominate over residues 891–901; that stretch reads KKYKQCHGRLQ.

The protein belongs to the SecA family. Monomer and homodimer. Part of the essential Sec protein translocation apparatus which comprises SecA, SecYEG and auxiliary proteins SecDF-YajC and YidC. The cofactor is Zn(2+).

The protein resides in the cell inner membrane. Its subcellular location is the cytoplasm. The catalysed reaction is ATP + H2O + cellular proteinSide 1 = ADP + phosphate + cellular proteinSide 2.. Part of the Sec protein translocase complex. Interacts with the SecYEG preprotein conducting channel. Has a central role in coupling the hydrolysis of ATP to the transfer of proteins into and across the cell membrane, serving both as a receptor for the preprotein-SecB complex and as an ATP-driven molecular motor driving the stepwise translocation of polypeptide chains across the membrane. The protein is Protein translocase subunit SecA of Shigella dysenteriae serotype 1 (strain Sd197).